The following is a 301-amino-acid chain: uncharacterized protein (301 aa).

Residues serine 44 and tyrosine 107 each act as charge relay system in the active site. Tyrosine 133 serves as the catalytic Proton donor. The Schiff-base intermediate with substrate role is filled by lysine 162.

The protein belongs to the DapA family. Homotetramer.

It is found in the cytoplasm. This is an uncharacterized protein from Pyrobaculum neutrophilum (strain DSM 2338 / JCM 9278 / NBRC 100436 / V24Sta) (Thermoproteus neutrophilus).